The chain runs to 464 residues: Argininosuccinate lyase (464 aa).

It belongs to the lyase 1 family. Argininosuccinate lyase subfamily.

It is found in the cytoplasm. It carries out the reaction 2-(N(omega)-L-arginino)succinate = fumarate + L-arginine. It participates in amino-acid biosynthesis; L-arginine biosynthesis; L-arginine from L-ornithine and carbamoyl phosphate: step 3/3. The chain is Argininosuccinate lyase from Alcanivorax borkumensis (strain ATCC 700651 / DSM 11573 / NCIMB 13689 / SK2).